Consider the following 352-residue polypeptide: MKDLQLVLFVLGAIAIIAVLVHGFWSIRKQQPKSMKQSPMAGFYKDQAKRRDSEGFDADGIGQVRVRKPGEVEETVIKPVLKTNLSQKPHSGTTKLTDTPLQDSLRQPGPHKTEPEHVEPKVVQPAQQSLFVGDDVKPAPTASTSMNTPKKIFNPSTSTAKLESYTGKPVAARPEPIKPPIQPAAPKVDVKAEVEEVKAEVEVKSTLKADAPVNEPVEPTDVLVLHIFAKAGEQIQGAELLPSLLSLNFKFGDMDIFHRHIDNAGTGKVLFSLANMLKPGIFDPDNMEQFVTQGVVLFMTLPGYGDPLMNFTIMLNSAYQIAEDLGAELLDGQRQPWSDATKKDYLRRLNAA.

Residues 1-6 (MKDLQL) lie on the Periplasmic side of the membrane. The chain crosses the membrane as a helical span at residues 7-27 (VLFVLGAIAIIAVLVHGFWSI). Topologically, residues 28–352 (RKQQPKSMKQ…KDYLRRLNAA (325 aa)) are cytoplasmic. Disordered stretches follow at residues 78-120 (KPVL…HVEP) and 138-160 (PAPT…TSTA). The segment covering 83 to 105 (TNLSQKPHSGTTKLTDTPLQDSL) has biased composition (polar residues). Residues 111-120 (HKTEPEHVEP) show a composition bias toward basic and acidic residues. Over residues 141 to 160 (TASTSMNTPKKIFNPSTSTA) the composition is skewed to polar residues.

The protein belongs to the ZipA family. Interacts with FtsZ via their C-terminal domains.

It is found in the cell inner membrane. In terms of biological role, essential cell division protein that stabilizes the FtsZ protofilaments by cross-linking them and that serves as a cytoplasmic membrane anchor for the Z ring. Also required for the recruitment to the septal ring of downstream cell division proteins. The protein is Cell division protein ZipA of Shewanella frigidimarina (strain NCIMB 400).